Reading from the N-terminus, the 417-residue chain is UDP-N-acetylglucosamine 1-carboxyvinyltransferase (417 aa).

Residue 22–23 (KN) coordinates phosphoenolpyruvate. Residue Arg92 participates in UDP-N-acetyl-alpha-D-glucosamine binding. Cys116 serves as the catalytic Proton donor. Cys116 bears the 2-(S-cysteinyl)pyruvic acid O-phosphothioketal mark. Residues 121–125 (RPIDL), Asp306, and Ile328 each bind UDP-N-acetyl-alpha-D-glucosamine.

The protein belongs to the EPSP synthase family. MurA subfamily.

The protein resides in the cytoplasm. It catalyses the reaction phosphoenolpyruvate + UDP-N-acetyl-alpha-D-glucosamine = UDP-N-acetyl-3-O-(1-carboxyvinyl)-alpha-D-glucosamine + phosphate. It participates in cell wall biogenesis; peptidoglycan biosynthesis. Functionally, cell wall formation. Adds enolpyruvyl to UDP-N-acetylglucosamine. The polypeptide is UDP-N-acetylglucosamine 1-carboxyvinyltransferase (Buchnera aphidicola subsp. Schizaphis graminum (strain Sg)).